The following is a 369-amino-acid chain: MHENFDKRLELLLEGLSLTRRFLFDPEEKETELKNLEQLSIQDSFWDDVSRAGRISEKIARLKQQLLEYNELKNKINSIKFFLEDEESSKDLEIQKELEKEFIFCEKKIAEWETLRLLAGELDRNSCFLSINAGAGGTESCDWVEMLFRMYSRWANSHGWKVEVIDRLDGEVAGIKHITLKLIGEYAYGYAKAESGVHRLVRISPFDSNAKRHTSFASVEVFPEIDDKIEVEIRPGDIRIDTYRSSGAGGQHVNVTDSAVRITHFPTGIVVSCQSERSQIQNREACMNMLRARIYQKLLQERLEKQNTNRKEKKEISWGSQIRNYVFQPYTLVKDVRTGYEVGNIQAMMDGELLDAFIKAYLADYGEIT.

The residue at position 251 (Gln251) is an N5-methylglutamine.

The protein belongs to the prokaryotic/mitochondrial release factor family. In terms of processing, methylated by PrmC. Methylation increases the termination efficiency of RF2.

The protein resides in the cytoplasm. Its function is as follows. Peptide chain release factor 2 directs the termination of translation in response to the peptide chain termination codons UGA and UAA. The sequence is that of Peptide chain release factor 2 (prfB) from Chlamydia muridarum (strain MoPn / Nigg).